The sequence spans 226 residues: X-linked lymphocyte-regulated protein 3C (226 aa).

The disordered stretch occupies residues 1–66 (MSSRKRKATD…QARKEKQDLV (66 aa)). Positions 8-18 (ATDTAGRHSRM) are enriched in basic and acidic residues. A compositionally biased stretch (polar residues) spans 21–30 (NLSSDDSQNP). Composition is skewed to basic and acidic residues over residues 39-48 (EVLDAGREDI) and 56-66 (QQARKEKQDLV). A coiled-coil region spans residues 155–210 (ESLTLQKNRMEEFKSLCEKYLEKLEVLRDSRGNSIAEELRRLIATLEIKLLMLHNQ).

This sequence belongs to the XLR/SYCP3 family. As to expression, expressed in lymphoid cells.

This chain is X-linked lymphocyte-regulated protein 3C (Xlr3c), found in Mus musculus (Mouse).